The primary structure comprises 583 residues: uncharacterized protein (583 aa).

Over residues 1-38 the composition is skewed to polar residues; sequence MGQGESIPSRQIQRDASMQAVSSESENINDSDRQNSGF. Disordered regions lie at residues 1–39, 53–124, 156–197, and 362–452; these read MGQG…SGFS, GLRR…AIPQ, TQNN…TAIG, and NSGS…QTDH. A compositionally biased stretch (basic and acidic residues) spans 70 to 80; the sequence is GNRDRTTERSA. Positions 88-102 are enriched in low complexity; it reads SLLNRNSPSLRSLSP. Polar residues-rich tracts occupy residues 156–165, 172–191, 384–408, and 420–452; these read TQNNQSTLAS, VSSS…NLES, LISS…NENV, and ASTA…QTDH. The RING-type zinc finger occupies 525–568; that stretch reads CLVCLSNFELNDECRRLKQCNHFFHRECIDQWLTSSQNSCPLCR. Ser580 is modified (phosphoserine).

Its subcellular location is the membrane. This is an uncharacterized protein from Schizosaccharomyces pombe (strain 972 / ATCC 24843) (Fission yeast).